Here is a 402-residue protein sequence, read N- to C-terminus: Imidazolonepropionase (402 aa).

Residues H66 and H68 each coordinate Fe(3+). Residues H66 and H68 each contribute to the Zn(2+) site. Residues R75, Y138, and H171 each coordinate 4-imidazolone-5-propanoate. N-formimidoyl-L-glutamate is bound at residue Y138. H236 is a binding site for Fe(3+). H236 contacts Zn(2+). 4-imidazolone-5-propanoate is bound at residue Q239. Residue D311 participates in Fe(3+) binding. D311 is a binding site for Zn(2+). N-formimidoyl-L-glutamate-binding residues include N313 and G315. T316 serves as a coordination point for 4-imidazolone-5-propanoate.

This sequence belongs to the metallo-dependent hydrolases superfamily. HutI family. Zn(2+) is required as a cofactor. The cofactor is Fe(3+).

The protein resides in the cytoplasm. The catalysed reaction is 4-imidazolone-5-propanoate + H2O = N-formimidoyl-L-glutamate. It functions in the pathway amino-acid degradation; L-histidine degradation into L-glutamate; N-formimidoyl-L-glutamate from L-histidine: step 3/3. Its function is as follows. Catalyzes the hydrolytic cleavage of the carbon-nitrogen bond in imidazolone-5-propanoate to yield N-formimidoyl-L-glutamate. It is the third step in the universal histidine degradation pathway. The chain is Imidazolonepropionase from Pseudomonas aeruginosa (strain LESB58).